Reading from the N-terminus, the 247-residue chain is Protein eak-4 (247 aa).

G2 carries the N-myristoyl glycine lipid modification.

In terms of tissue distribution, expressed in the 2 embryonic head hypodermal cells XXXL/R.

It localises to the cell membrane. In terms of biological role, together with eak-6 and sdf-9, negatively regulates dauer larva formation downstream of the insulin-like receptor daf-2 and in parallel with age-1, pdk-1 and akt-1. The chain is Protein eak-4 from Caenorhabditis elegans.